Here is a 506-residue protein sequence, read N- to C-terminus: Adenylosuccinate synthetase (506 aa).

Residues G35 to K41 and G63 to T65 contribute to the GTP site. Residue D36 is the Proton acceptor of the active site. Mg(2+) contacts are provided by D36 and G63. IMP contacts are provided by residues D36–K39, N61–H64, T212, R226, N304, T319, and R383. H64 (proton donor) is an active-site residue. V379 to R385 is a binding site for substrate. GTP is bound by residues R385, K411–D413, and G494–G496.

The protein belongs to the adenylosuccinate synthetase family. In terms of assembly, homodimer. The cofactor is Mg(2+).

It localises to the cytoplasm. The catalysed reaction is IMP + L-aspartate + GTP = N(6)-(1,2-dicarboxyethyl)-AMP + GDP + phosphate + 2 H(+). It participates in purine metabolism; AMP biosynthesis via de novo pathway; AMP from IMP: step 1/2. Its function is as follows. Plays an important role in the de novo pathway and in the salvage pathway of purine nucleotide biosynthesis. Catalyzes the first committed step in the biosynthesis of AMP from IMP. In Drosophila yakuba (Fruit fly), this protein is Adenylosuccinate synthetase.